Consider the following 113-residue polypeptide: U-scoloptoxin(16)-Sa1a (113 aa).

The N-terminal stretch at Met-1–Ala-29 is a signal peptide.

Belongs to the scoloptoxin-16 family. In terms of processing, contains 4 disulfide bonds. As to expression, expressed by the venom gland.

It localises to the secreted. In Scolopendra alternans (Florida Keys giant centipede), this protein is U-scoloptoxin(16)-Sa1a.